Reading from the N-terminus, the 186-residue chain is Translation initiation factor IF-3 (186 aa).

The segment at M1–R21 is disordered.

This sequence belongs to the IF-3 family. Monomer.

The protein resides in the cytoplasm. Functionally, IF-3 binds to the 30S ribosomal subunit and shifts the equilibrium between 70S ribosomes and their 50S and 30S subunits in favor of the free subunits, thus enhancing the availability of 30S subunits on which protein synthesis initiation begins. This Borrelia turicatae (strain 91E135) protein is Translation initiation factor IF-3.